We begin with the raw amino-acid sequence, 234 residues long: Adenosine 5'-phosphosulfate reductase (234 aa).

[4Fe-4S] cluster contacts are provided by cysteine 120, cysteine 121, cysteine 203, and cysteine 206. Cysteine 229 serves as the catalytic Nucleophile; cysteine thiosulfonate intermediate.

It belongs to the PAPS reductase family. CysH subfamily. [4Fe-4S] cluster is required as a cofactor.

The protein localises to the cytoplasm. It catalyses the reaction [thioredoxin]-disulfide + sulfite + AMP + 2 H(+) = adenosine 5'-phosphosulfate + [thioredoxin]-dithiol. It functions in the pathway sulfur metabolism; hydrogen sulfide biosynthesis; sulfite from sulfate. In terms of biological role, catalyzes the formation of sulfite from adenosine 5'-phosphosulfate (APS) using thioredoxin as an electron donor. This is Adenosine 5'-phosphosulfate reductase from Bacillus cytotoxicus (strain DSM 22905 / CIP 110041 / 391-98 / NVH 391-98).